The chain runs to 800 residues: Protein PET111, mitochondrial (800 aa).

It to yeast YHR160C.

The protein resides in the mitochondrion matrix. Functionally, required for translation of the mitochondrial gene for cytochrome c oxidase subunit II (COX2). In Saccharomyces cerevisiae (strain ATCC 204508 / S288c) (Baker's yeast), this protein is Protein PET111, mitochondrial (PET111).